Reading from the N-terminus, the 228-residue chain is Phosphatidylserine decarboxylase proenzyme (228 aa).

Catalysis depends on Ser197, which acts as the Schiff-base intermediate with substrate; via pyruvic acid. Ser197 carries the post-translational modification Pyruvic acid (Ser); by autocatalysis.

The protein belongs to the phosphatidylserine decarboxylase family. PSD-A subfamily. As to quaternary structure, heterodimer of a large membrane-associated beta subunit and a small pyruvoyl-containing alpha subunit. Pyruvate serves as cofactor. Post-translationally, is synthesized initially as an inactive proenzyme. Formation of the active enzyme involves a self-maturation process in which the active site pyruvoyl group is generated from an internal serine residue via an autocatalytic post-translational modification. Two non-identical subunits are generated from the proenzyme in this reaction, and the pyruvate is formed at the N-terminus of the alpha chain, which is derived from the carboxyl end of the proenzyme. The post-translation cleavage follows an unusual pathway, termed non-hydrolytic serinolysis, in which the side chain hydroxyl group of the serine supplies its oxygen atom to form the C-terminus of the beta chain, while the remainder of the serine residue undergoes an oxidative deamination to produce ammonia and the pyruvoyl prosthetic group on the alpha chain.

It is found in the cell membrane. It catalyses the reaction a 1,2-diacyl-sn-glycero-3-phospho-L-serine + H(+) = a 1,2-diacyl-sn-glycero-3-phosphoethanolamine + CO2. It participates in phospholipid metabolism; phosphatidylethanolamine biosynthesis; phosphatidylethanolamine from CDP-diacylglycerol: step 2/2. Its function is as follows. Catalyzes the formation of phosphatidylethanolamine (PtdEtn) from phosphatidylserine (PtdSer). The polypeptide is Phosphatidylserine decarboxylase proenzyme (Phocaeicola vulgatus (strain ATCC 8482 / DSM 1447 / JCM 5826 / CCUG 4940 / NBRC 14291 / NCTC 11154) (Bacteroides vulgatus)).